A 398-amino-acid chain; its full sequence is Probable aminomethyltransferase (398 aa).

This sequence belongs to the GcvT family. In terms of assembly, the glycine cleavage system is composed of four proteins: P, T, L and H.

It catalyses the reaction N(6)-[(R)-S(8)-aminomethyldihydrolipoyl]-L-lysyl-[protein] + (6S)-5,6,7,8-tetrahydrofolate = N(6)-[(R)-dihydrolipoyl]-L-lysyl-[protein] + (6R)-5,10-methylene-5,6,7,8-tetrahydrofolate + NH4(+). The glycine cleavage system catalyzes the degradation of glycine. This Pyrococcus horikoshii (strain ATCC 700860 / DSM 12428 / JCM 9974 / NBRC 100139 / OT-3) protein is Probable aminomethyltransferase.